A 403-amino-acid polypeptide reads, in one-letter code: 1-deoxy-D-xylulose 5-phosphate reductoisomerase (403 aa).

NADPH contacts are provided by T18, G19, S20, I21, Q46, and N132. K133 lines the 1-deoxy-D-xylulose 5-phosphate pocket. Residue E134 participates in NADPH binding. D158 is a binding site for Mn(2+). Residues S159, E160, S189, and H212 each contribute to the 1-deoxy-D-xylulose 5-phosphate site. E160 is a binding site for Mn(2+). G218 contributes to the NADPH binding site. The 1-deoxy-D-xylulose 5-phosphate site is built by S225, N230, K231, and E234. E234 is a Mn(2+) binding site.

Belongs to the DXR family. It depends on Mg(2+) as a cofactor. Requires Mn(2+) as cofactor.

It catalyses the reaction 2-C-methyl-D-erythritol 4-phosphate + NADP(+) = 1-deoxy-D-xylulose 5-phosphate + NADPH + H(+). It functions in the pathway isoprenoid biosynthesis; isopentenyl diphosphate biosynthesis via DXP pathway; isopentenyl diphosphate from 1-deoxy-D-xylulose 5-phosphate: step 1/6. Its function is as follows. Catalyzes the NADPH-dependent rearrangement and reduction of 1-deoxy-D-xylulose-5-phosphate (DXP) to 2-C-methyl-D-erythritol 4-phosphate (MEP). This chain is 1-deoxy-D-xylulose 5-phosphate reductoisomerase, found in Aromatoleum aromaticum (strain DSM 19018 / LMG 30748 / EbN1) (Azoarcus sp. (strain EbN1)).